Reading from the N-terminus, the 447-residue chain is Signal recognition particle protein (447 aa).

GTP contacts are provided by residues 108–115 (GLQGSGKT), 190–194 (DTAGR), and 248–251 (TKLD).

Belongs to the GTP-binding SRP family. SRP54 subfamily. Part of the signal recognition particle protein translocation system, which is composed of SRP and FtsY. Interacts with RNA.

The protein resides in the cytoplasm. The catalysed reaction is GTP + H2O = GDP + phosphate + H(+). In terms of biological role, involved in targeting and insertion of nascent membrane proteins into the cytoplasmic membrane. Binds to the hydrophobic signal sequence of the ribosome-nascent chain (RNC) as it emerges from the ribosomes. The SRP-RNC complex is then targeted to the cytoplasmic membrane where it interacts with the SRP receptor FtsY. This Mycoplasma mycoides protein is Signal recognition particle protein.